Consider the following 252-residue polypeptide: 2-succinyl-6-hydroxy-2,4-cyclohexadiene-1-carboxylate synthase (252 aa).

This sequence belongs to the AB hydrolase superfamily. MenH family. As to quaternary structure, monomer.

It carries out the reaction 5-enolpyruvoyl-6-hydroxy-2-succinyl-cyclohex-3-ene-1-carboxylate = (1R,6R)-6-hydroxy-2-succinyl-cyclohexa-2,4-diene-1-carboxylate + pyruvate. It participates in quinol/quinone metabolism; 1,4-dihydroxy-2-naphthoate biosynthesis; 1,4-dihydroxy-2-naphthoate from chorismate: step 3/7. The protein operates within quinol/quinone metabolism; menaquinone biosynthesis. In terms of biological role, catalyzes a proton abstraction reaction that results in 2,5-elimination of pyruvate from 2-succinyl-5-enolpyruvyl-6-hydroxy-3-cyclohexene-1-carboxylate (SEPHCHC) and the formation of 2-succinyl-6-hydroxy-2,4-cyclohexadiene-1-carboxylate (SHCHC). The polypeptide is 2-succinyl-6-hydroxy-2,4-cyclohexadiene-1-carboxylate synthase (Escherichia coli O17:K52:H18 (strain UMN026 / ExPEC)).